Reading from the N-terminus, the 874-residue chain is Alanine--tRNA ligase (874 aa).

Zn(2+) is bound by residues H562, H566, C664, and H668.

Belongs to the class-II aminoacyl-tRNA synthetase family. Requires Zn(2+) as cofactor.

The protein resides in the cytoplasm. It catalyses the reaction tRNA(Ala) + L-alanine + ATP = L-alanyl-tRNA(Ala) + AMP + diphosphate. Its function is as follows. Catalyzes the attachment of alanine to tRNA(Ala) in a two-step reaction: alanine is first activated by ATP to form Ala-AMP and then transferred to the acceptor end of tRNA(Ala). Also edits incorrectly charged Ser-tRNA(Ala) and Gly-tRNA(Ala) via its editing domain. The protein is Alanine--tRNA ligase of Shewanella halifaxensis (strain HAW-EB4).